A 308-amino-acid chain; its full sequence is Ribosomal protein L11 methyltransferase (308 aa).

4 residues coordinate S-adenosyl-L-methionine: Thr148, Gly169, Asp191, and Asn239.

It belongs to the methyltransferase superfamily. PrmA family.

It localises to the cytoplasm. The catalysed reaction is L-lysyl-[protein] + 3 S-adenosyl-L-methionine = N(6),N(6),N(6)-trimethyl-L-lysyl-[protein] + 3 S-adenosyl-L-homocysteine + 3 H(+). In terms of biological role, methylates ribosomal protein L11. The chain is Ribosomal protein L11 methyltransferase from Psychrobacter cryohalolentis (strain ATCC BAA-1226 / DSM 17306 / VKM B-2378 / K5).